The chain runs to 229 residues: MKIGIVGAMKQEVEILANLMRNQTVTQVAGCTIYEGLINGKQVALLQSGIGKVAAAIGTTALLQLAKPDVVLNTGSAGGVADGLKVGDIVISTETAYHDADVTAFGYAKGQLPACPATFISDEKLTALAKQVAQAQGHNVKRGLICSGDSFIAGGERLAQIKADFPNVTAVEMEAAAIAQVCHVFRVPFVVVRAISDAGDGQAGMSFEEFLPIAAKQSSAMIIGMLEQL.

The active-site Proton acceptor is the Glu-12. Substrate-binding positions include Gly-78, Ile-152, and Met-173–Glu-174. Asp-197 acts as the Proton donor in catalysis.

Belongs to the PNP/UDP phosphorylase family. MtnN subfamily.

It carries out the reaction S-adenosyl-L-homocysteine + H2O = S-(5-deoxy-D-ribos-5-yl)-L-homocysteine + adenine. It catalyses the reaction S-methyl-5'-thioadenosine + H2O = 5-(methylsulfanyl)-D-ribose + adenine. The enzyme catalyses 5'-deoxyadenosine + H2O = 5-deoxy-D-ribose + adenine. It functions in the pathway amino-acid biosynthesis; L-methionine biosynthesis via salvage pathway; S-methyl-5-thio-alpha-D-ribose 1-phosphate from S-methyl-5'-thioadenosine (hydrolase route): step 1/2. In terms of biological role, catalyzes the irreversible cleavage of the glycosidic bond in both 5'-methylthioadenosine (MTA) and S-adenosylhomocysteine (SAH/AdoHcy) to adenine and the corresponding thioribose, 5'-methylthioribose and S-ribosylhomocysteine, respectively. Also cleaves 5'-deoxyadenosine, a toxic by-product of radical S-adenosylmethionine (SAM) enzymes, into 5-deoxyribose and adenine. The polypeptide is 5'-methylthioadenosine/S-adenosylhomocysteine nucleosidase (Mannheimia succiniciproducens (strain KCTC 0769BP / MBEL55E)).